A 263-amino-acid polypeptide reads, in one-letter code: Protein IQ-DOMAIN 9 (263 aa).

The interval 16-41 (SKQGTEKKKTSAVKPKKGSKKKGTSL) is disordered. Residues 21–28 (EKKKTSAV) carry the Nuclear localization signal 1 motif. The segment covering 25 to 38 (TSAVKPKKGSKKKG) has biased composition (basic residues). Residues 46–75 (EDWAATRIQTAFKAYKARKSLRRLKGIARA) enclose the IQ domain. Residues 59 to 78 (AYKARKSLRRLKGIARAKLS) form a calmodulin-binding region. The Nuclear localization signal 2 signature appears at 107–114 (ARRVCMVT). Residues 216 to 263 (TPKKPKSSKTDSNSPAKRTVSLSSVPAKTPFPGARNTVKPRRLSFPGA) are disordered. The segment covering 226–241 (DSNSPAKRTVSLSSVP) has biased composition (polar residues).

This sequence belongs to the IQD family. As to quaternary structure, binds to multiple calmodulin (CaM) in the presence of Ca(2+) and CaM-like proteins.

The protein resides in the nucleus. Its subcellular location is the nuclear body. May be involved in cooperative interactions with calmodulins or calmodulin-like proteins. Recruits calmodulin proteins to microtubules, thus being a potential scaffold in cellular signaling and trafficking. May associate with nucleic acids and regulate gene expression at the transcriptional or post-transcriptional level. The protein is Protein IQ-DOMAIN 9 of Arabidopsis thaliana (Mouse-ear cress).